The primary structure comprises 154 residues: Transcriptional repressor NrdR (154 aa).

A zinc finger lies at 3–34; that stretch reads CPFCRHPDSRVIDSRETDEGQAIRRRRSCPEC. In terms of domain architecture, ATP-cone spans 46-136; the sequence is LAVVKRSGVT…VYRSFSSADD (91 aa).

The protein belongs to the NrdR family. Zn(2+) serves as cofactor.

In terms of biological role, negatively regulates transcription of bacterial ribonucleotide reductase nrd genes and operons by binding to NrdR-boxes. This is Transcriptional repressor NrdR from Mycobacterium bovis (strain ATCC BAA-935 / AF2122/97).